Consider the following 200-residue polypeptide: Male-specific histamine-binding salivary protein (200 aa).

The first 18 residues, 1–18 (MKVLLLVLGAALCQNADA), serve as a signal peptide directing secretion. Residues S37, D41, D56, and W59 each contribute to the histamine site. Disulfide bonds link C65–C193 and C137–C169. N79 carries N-linked (GlcNAc...) asparagine glycosylation. Residues E97, Y115, F125, D138, E154, and W156 each coordinate histamine.

This sequence belongs to the calycin superfamily. Histamine-binding salivary protein family. In terms of assembly, homodimer; disulcde-linked. N-glycosylated. As to expression, expressed in salivary glands.

The protein resides in the secreted. In terms of biological role, salivary tick protein that acts by scavenging histamine at the wound site, outcompeting histamine receptors for histamine, thereby overcoming host inflammatory responses. Binds histamine with a high-affinity (Kd=1.2 nM). Contains two binding histamine sites (H and L), that appear to bind histamine with differing affinities. The sequence is that of Male-specific histamine-binding salivary protein from Rhipicephalus appendiculatus (Brown ear tick).